We begin with the raw amino-acid sequence, 4518 residues long: Dynein axonemal heavy chain 11 (4518 aa).

Positions 1-1857 (MAASVAAQEA…LVHICDAQFQ (1857 aa)) are stem. 4 AAA regions span residues 1858–2079 (YFYE…VLVV), 2139–2368 (QMVR…TSFK), 2474–2721 (TMDP…VFQG), and 2819–3068 (NYND…EGRH). Residues 1896–1903 (GPAGTGKT), 2177–2184 (GNAGTGKS), 2512–2519 (GNAGVGKT), and 2857–2864 (GVGGSGKQ) each bind ATP. A stalk region spans residues 3074-3405 (KSFLEQISLF…GQSIKSFEAQ (332 aa)). The stretch at 3322–3391 (LAQANLELAT…NRLVKELEVK (70 aa)) forms a coiled coil. AAA regions lie at residues 3461 to 3688 (LTDD…EIER) and 3898 to 4124 (LRNF…VLYN).

The protein belongs to the dynein heavy chain family. As to quaternary structure, consists of at least two heavy chains and a number of intermediate and light chains. Interacts with CFAP45.

It localises to the cytoplasm. It is found in the cytoskeleton. The protein localises to the cilium axoneme. Force generating protein of respiratory cilia. Produces force towards the minus ends of microtubules. Dynein has ATPase activity; the force-producing power stroke is thought to occur on release of ADP. This chain is Dynein axonemal heavy chain 11 (DNAH11), found in Sus scrofa (Pig).